The sequence spans 1295 residues: MMEILRGSPALSAFRINKLLARFQAARLPVHNIYAEYVHFADLNAPLNDDEHAQLERLLKYGPALASHAPQGKLLLVTPRPGTISPWSSKATDIAHNCGLQQVNRLERGVAYYIEAGTLTNEQWQQVTAELHDRMMETVFFALDDAEQLFAHHQPTPVTSVDLLGQGRQALIDANLRLGLALAEDEIDYLQDAFTKLGRNPNDIELYMFAQANSEHCRHKIFNADWVIDGEQQPKSLFKMIKNTFETTPDHVLSAYKDNAAVMEGSEVGRYFADHETGRYDFHQEPAHILMKVETHNHPTAISPWPGAATGSGGEIRDEGATGRGAKPKAGLVGFSVSNLRIPGFEQPWEEDFGKPERIVTALDIMTEGPLGGAAFNNEFGRPALNGYFRTYEEKVNSHNGEELRGYHKPIMLAGGIGNIRADHVQKGEINVGAKLVVLGGPAMNIGLGGGAASSMASGQSDADLDFASVQRDNPEMERRCQEVIDRCWQLGDANPILFIHDVGAGGLSNAMPELVSDGGRGGKFELREILSDEPGMSPLEIWCNESQERYVLAVAADQLPLFDELCKRERAPYAVIGEATEELHLSLHDRHFDNQPIDLPLDVLLGKTPKMTRDVQTLKAKGDALAREGITIADAVKRVLHLPTVAEKTFLVTIGDRSVTGMVARDQMVGPWQVPVANCAVTTASLDSYYGEAMAIGERAPVALLDFAASARLAVGEALTNIAATQIGDIKRIKLSANWMAAAGHPGEDAGLYEAVKAVGEELCPALGLTIPVGKDSMSMKTRWQEGNEEREMTSPLSLVISAFARVEDVRHTITPQLSTEDNALLLIDLGKGNNALGATALAQVYRQLGDKPADVRDVAQLKGFYDAIQALVAQRKLLAYHDRSDGGLLVTLAEMAFAGHCGIDADIATLGDDRLAALFNEELGAVIQVRAADREAVESVLAQHGLADCVHYVGQAVSGDRFVITANGQTVFSESRTTLRVWWAETTWQMQRLRDNPECADQEHQAKSNDADPGLNVKLSFDINEDVAAPYIATGARPKVAVLREQGVNSHVEMAAAFHRAGFDAIDVHMSDLLTGRTGLEDFHALVACGGFSYGDVLGAGEGWAKSILFNDRVRDEFATFFHRPQTLALGVCNGCQMMSNLRELIPGSELWPRFVRNTSDRFEARFSLVEVTQSPSLLLQGMVGSQMPIAVSHGEGRVEVRDAAHLAALESKGLVALRYVDNFGKVTETYPANPNGSPNGITAVTTESGRVTIMMPHPERVFRTVSNSWHPENWGEDGPWMRIFRNARKQLG.

A disordered region spans residues 305-327; it reads WPGAATGSGGEIRDEGATGRGAK. ATP is bound by residues 307 to 318 and A678; that span reads GAATGSGGEIRD. The Mg(2+) site is built by E718, N722, and D884. S886 contacts ATP. The Glutamine amidotransferase type-1 domain occupies 1042-1295; it reads VAVLREQGVN…IFRNARKQLG (254 aa). The Nucleophile role is filled by C1135. Active-site residues include H1260 and E1262.

The protein in the N-terminal section; belongs to the FGAMS family. In terms of assembly, monomer. In terms of processing, both N-terminus methionine truncation and retention have been observed for this protein.

Its subcellular location is the cytoplasm. It carries out the reaction N(2)-formyl-N(1)-(5-phospho-beta-D-ribosyl)glycinamide + L-glutamine + ATP + H2O = 2-formamido-N(1)-(5-O-phospho-beta-D-ribosyl)acetamidine + L-glutamate + ADP + phosphate + H(+). The protein operates within purine metabolism; IMP biosynthesis via de novo pathway; 5-amino-1-(5-phospho-D-ribosyl)imidazole from N(2)-formyl-N(1)-(5-phospho-D-ribosyl)glycinamide: step 1/2. In terms of biological role, phosphoribosylformylglycinamidine synthase involved in the purines biosynthetic pathway. Catalyzes the ATP-dependent conversion of formylglycinamide ribonucleotide (FGAR) and glutamine to yield formylglycinamidine ribonucleotide (FGAM) and glutamate. The chain is Phosphoribosylformylglycinamidine synthase from Escherichia coli (strain K12).